The sequence spans 235 residues: Small ribosomal subunit protein uS3 (235 aa).

Positions 39–107 (VRLFLRKELF…PTQINIAEIR (69 aa)) constitute a KH type-2 domain.

This sequence belongs to the universal ribosomal protein uS3 family. As to quaternary structure, part of the 30S ribosomal subunit. Forms a tight complex with proteins S10 and S14.

Binds the lower part of the 30S subunit head. Binds mRNA in the 70S ribosome, positioning it for translation. This Buchnera aphidicola subsp. Baizongia pistaciae (strain Bp) protein is Small ribosomal subunit protein uS3.